The chain runs to 78 residues: Small ribosomal subunit protein bS18 (78 aa).

The protein belongs to the bacterial ribosomal protein bS18 family. As to quaternary structure, part of the 30S ribosomal subunit. Forms a tight heterodimer with protein bS6.

Binds as a heterodimer with protein bS6 to the central domain of the 16S rRNA, where it helps stabilize the platform of the 30S subunit. The polypeptide is Small ribosomal subunit protein bS18 (Nocardioides sp. (strain ATCC BAA-499 / JS614)).